The chain runs to 154 residues: Superoxide dismutase [Cu-Zn] (154 aa).

Cu cation-binding residues include H47, H49, and H64. Cysteines 58 and 147 form a disulfide. The Zn(2+) site is built by H64, H72, H81, and D84. H121 lines the Cu cation pocket. R144 contacts substrate.

This sequence belongs to the Cu-Zn superoxide dismutase family. As to quaternary structure, homodimer. Requires Cu cation as cofactor. Zn(2+) serves as cofactor.

Its subcellular location is the cytoplasm. The enzyme catalyses 2 superoxide + 2 H(+) = H2O2 + O2. Functionally, destroys radicals which are normally produced within the cells and which are toxic to biological systems. This Candida albicans (Yeast) protein is Superoxide dismutase [Cu-Zn] (SOD1).